A 139-amino-acid chain; its full sequence is Small ribosomal subunit protein uS11 (139 aa).

2 disordered regions span residues 1-33 (MPPA…AAHI) and 118-139 (GAIS…RRRV). Residues 14-23 (KGQKTRRREK) show a composition bias toward basic residues.

This sequence belongs to the universal ribosomal protein uS11 family. In terms of assembly, part of the 30S ribosomal subunit. Interacts with proteins S7 and S18. Binds to IF-3.

Its function is as follows. Located on the platform of the 30S subunit, it bridges several disparate RNA helices of the 16S rRNA. Forms part of the Shine-Dalgarno cleft in the 70S ribosome. The sequence is that of Small ribosomal subunit protein uS11 from Mycobacterium tuberculosis (strain ATCC 25177 / H37Ra).